The chain runs to 1934 residues: Myosin-7 (1934 aa).

The Myosin N-terminal SH3-like domain occupies 31 to 80; it reads DLKKDVFVPDDKEEFVKAKIVSREGGKVTAETENGKTVTVKEDQVMQQNP. The 694-residue stretch at 84–777 folds into the Myosin motor domain; sequence DKIEDMAMLT…LLGLLEEMRD (694 aa). Lys128 carries the post-translational modification N6,N6,N6-trimethyllysine. 177 to 184 provides a ligand contact to ATP; that stretch reads GESGAGKT. A Phosphothreonine modification is found at Thr377. Actin-binding regions lie at residues 654–676 and 756–770; these read LNKL…IPNE and KFGH…GLLG. One can recognise an IQ domain in the interval 780–809; it reads LSRIITRIQAQSRGLLSRMEFKKLLERRDS. Residues 839–1934 are a coiled coil; the sequence is LKSAETEKEM…DIGAKGLNEE (1096 aa). Ser1136 and Ser1268 each carry phosphoserine. At Thr1281 the chain carries Phosphothreonine. At Tyr1307 the chain carries Phosphotyrosine. Thr1308 is modified (phosphothreonine). Residue Ser1509 is modified to Phosphoserine. Phosphothreonine is present on Thr1512. The disordered stretch occupies residues 1914 to 1934; that stretch reads SQVNKLRAKSRDIGAKGLNEE. Positions 1922-1934 are enriched in basic and acidic residues; it reads KSRDIGAKGLNEE.

This sequence belongs to the TRAFAC class myosin-kinesin ATPase superfamily. Myosin family. As to quaternary structure, muscle myosin is a hexameric protein that consists of 2 heavy chain subunits (MHC), 2 alkali light chain subunits (MLC) and 2 regulatory light chain subunits (MLC-2). Interacts with ECPAS. Interacts (via C-terminus) with LRRC39.

It localises to the cytoplasm. The protein resides in the myofibril. Its subcellular location is the sarcomere. Functionally, myosins are actin-based motor molecules with ATPase activity essential for muscle contraction. Forms regular bipolar thick filaments that, together with actin thin filaments, constitute the fundamental contractile unit of skeletal and cardiac muscle. The chain is Myosin-7 (MYH7) from Mesocricetus auratus (Golden hamster).